The sequence spans 178 residues: Ribosome maturation factor RimP (178 aa).

The protein belongs to the RimP family.

The protein resides in the cytoplasm. Required for maturation of 30S ribosomal subunits. This chain is Ribosome maturation factor RimP, found in Mycolicibacterium gilvum (strain PYR-GCK) (Mycobacterium gilvum (strain PYR-GCK)).